A 236-amino-acid polypeptide reads, in one-letter code: Aminopyrimidine aminohydrolase (236 aa).

Asp-44 lines the substrate pocket. The active-site Nucleophile is the Cys-135. 2 residues coordinate substrate: Tyr-139 and Tyr-163. Glu-205 serves as the catalytic Proton donor.

It belongs to the TenA family. Homotetramer.

It catalyses the reaction 4-amino-5-aminomethyl-2-methylpyrimidine + H2O = 4-amino-5-hydroxymethyl-2-methylpyrimidine + NH4(+). It carries out the reaction thiamine + H2O = 5-(2-hydroxyethyl)-4-methylthiazole + 4-amino-5-hydroxymethyl-2-methylpyrimidine + H(+). Its pathway is cofactor biosynthesis; thiamine diphosphate biosynthesis. Its function is as follows. Catalyzes an amino-pyrimidine hydrolysis reaction at the C5' of the pyrimidine moiety of thiamine compounds, a reaction that is part of a thiamine salvage pathway. Thus, catalyzes the conversion of 4-amino-5-aminomethyl-2-methylpyrimidine to 4-amino-5-hydroxymethyl-2-methylpyrimidine (HMP). To a lesser extent, is also able to catalyze the hydrolytic cleavage of thiamine; however, this thiaminase activity is unlikely to be physiologically relevant. Therefore, is involved in the regeneration of the thiamine pyrimidine from thiamine degraded products present in the environment, rather than in thiamine degradation. The chain is Aminopyrimidine aminohydrolase from Bacillus subtilis (strain 168).